A 298-amino-acid chain; its full sequence is 4-diphosphocytidyl-2-C-methyl-D-erythritol kinase (298 aa).

Residue lysine 19 is part of the active site. Proline 106 to alanine 116 contacts ATP. The active site involves aspartate 148.

It belongs to the GHMP kinase family. IspE subfamily.

The enzyme catalyses 4-CDP-2-C-methyl-D-erythritol + ATP = 4-CDP-2-C-methyl-D-erythritol 2-phosphate + ADP + H(+). The protein operates within isoprenoid biosynthesis; isopentenyl diphosphate biosynthesis via DXP pathway; isopentenyl diphosphate from 1-deoxy-D-xylulose 5-phosphate: step 3/6. Its function is as follows. Catalyzes the phosphorylation of the position 2 hydroxy group of 4-diphosphocytidyl-2C-methyl-D-erythritol. This is 4-diphosphocytidyl-2-C-methyl-D-erythritol kinase from Rhizobium leguminosarum bv. trifolii (strain WSM2304).